A 273-amino-acid polypeptide reads, in one-letter code: Shikimate kinase (273 aa).

Residue 85–95 (PVGKGLKSSSA) participates in ATP binding.

The protein belongs to the GHMP kinase family. Archaeal shikimate kinase subfamily.

The protein resides in the cytoplasm. The enzyme catalyses shikimate + ATP = 3-phosphoshikimate + ADP + H(+). Its pathway is metabolic intermediate biosynthesis; chorismate biosynthesis; chorismate from D-erythrose 4-phosphate and phosphoenolpyruvate: step 5/7. The polypeptide is Shikimate kinase (Pyrococcus furiosus (strain ATCC 43587 / DSM 3638 / JCM 8422 / Vc1)).